The primary structure comprises 322 residues: Cytochrome f (322 aa).

Positions 1-35 are cleaved as a signal peptide; it reads MQTRNTFSWTWIREEITRSISVSLMIYIITWSSIS. Heme-binding residues include Tyr-38, Cys-58, Cys-61, and His-62. Residues 288-308 traverse the membrane as a helical segment; it reads VQGLLFFLGSVVLAQIFLVLK.

Belongs to the cytochrome f family. In terms of assembly, the 4 large subunits of the cytochrome b6-f complex are cytochrome b6, subunit IV (17 kDa polypeptide, petD), cytochrome f and the Rieske protein, while the 4 small subunits are PetG, PetL, PetM and PetN. The complex functions as a dimer. Heme serves as cofactor.

It localises to the plastid. The protein resides in the chloroplast thylakoid membrane. Functionally, component of the cytochrome b6-f complex, which mediates electron transfer between photosystem II (PSII) and photosystem I (PSI), cyclic electron flow around PSI, and state transitions. This chain is Cytochrome f, found in Aethionema cordifolium (Lebanon stonecress).